A 545-amino-acid chain; its full sequence is Cryptochrome-1 (545 aa).

Residues 3 to 140 form the Photolyase/cryptochrome alpha/beta domain; that stretch reads INNILWFRHG…RCVENVSHTL (138 aa). Residues arginine 237, serine 265, serine 267, glutamine 308, histidine 375, 407-409, cysteine 413, and asparagine 416 each bind FAD; that span reads DAD.

This sequence belongs to the DNA photolyase class-1 family. As to quaternary structure, interacts with tim and per; promoted by light conditions. It depends on FAD as a cofactor.

The protein localises to the cytoplasm. Its subcellular location is the perinuclear region. The protein resides in the nucleus. Its function is as follows. Blue light-dependent regulator that is the input of the circadian feedback loop. Has no photolyase activity for cyclobutane pyrimidine dimers or 6-4 photoproducts. Regulation of expression by light suggests a role in photoreception for locomotor activity rhythms. Functions, together with per, as a transcriptional repressor required for the oscillation of peripheral circadian clocks and for the correct specification of clock cells. Genes directly activated by the transcription factors Clock (Clk) and cycle (cyc) are repressed by cry. The chain is Cryptochrome-1 from Anopheles gambiae (African malaria mosquito).